Here is a 301-residue protein sequence, read N- to C-terminus: Polynucleotide kinase (301 aa).

In terms of assembly, homotetramer. Requires Mg(2+) as cofactor.

It carries out the reaction a 5'-end dephospho-2'-deoxyribonucleoside-DNA + ATP = a 5'-end 5'-phospho-2'-deoxyribonucleoside-DNA + ADP + H(+). It catalyses the reaction a 2'-deoxyribonucleoside 3'-phosphate + H2O = a 2'-deoxyribonucleoside + phosphate. Its function is as follows. Acts as a 5'-hydroxyl kinase, a 3'-phosphatase and a 2',3'-cyclic phosphodiesterase. Catalyzes the transfer of the terminal phosphate of ATP to the 5'-hydroxyl termini of ribo- and deoxyribonucleotides. In the presence of ADP the enzyme also catalyzes an exchange reaction. In the exchange reaction, an excess ADP causes the enzyme to transfer the 5' terminal phosphate from phosphorylated DNA to ADP. Involved in countering a host defense mechanism which activates T4-induced anticodon nuclease and shuts off viral translation. The polynucleotide kinase modifies the ends of nicked tRNA generated by the antiviral response of the host bacteria and facilitates repair by T4 RNA ligase. The polypeptide is Polynucleotide kinase (pseT) (Escherichia coli (Bacteriophage T4)).